Reading from the N-terminus, the 177-residue chain is Large ribosomal subunit protein uL6 (177 aa).

It belongs to the universal ribosomal protein uL6 family. In terms of assembly, part of the 50S ribosomal subunit.

Its function is as follows. This protein binds to the 23S rRNA, and is important in its secondary structure. It is located near the subunit interface in the base of the L7/L12 stalk, and near the tRNA binding site of the peptidyltransferase center. This Pseudomonas paraeruginosa (strain DSM 24068 / PA7) (Pseudomonas aeruginosa (strain PA7)) protein is Large ribosomal subunit protein uL6.